The following is a 76-amino-acid chain: ATP synthase subunit 9, mitochondrial (76 aa).

The next 2 membrane-spanning stretches (helical) occupy residues 14–34 (MATL…VALI) and 52–72 (ILGF…SFLL).

This sequence belongs to the ATPase C chain family. As to quaternary structure, F-type ATPases have 2 components, CF(1) - the catalytic core - and CF(0) - the membrane proton channel. CF(1) has five subunits: alpha(3), beta(3), gamma(1), delta(1), epsilon(1). CF(0) has three main subunits: a, b and c.

It localises to the mitochondrion membrane. Its function is as follows. Mitochondrial membrane ATP synthase (F(1)F(0) ATP synthase or Complex V) produces ATP from ADP in the presence of a proton gradient across the membrane which is generated by electron transport complexes of the respiratory chain. F-type ATPases consist of two structural domains, F(1) - containing the extramembraneous catalytic core and F(0) - containing the membrane proton channel, linked together by a central stalk and a peripheral stalk. During catalysis, ATP synthesis in the catalytic domain of F(1) is coupled via a rotary mechanism of the central stalk subunits to proton translocation. Part of the complex F(0) domain. A homomeric c-ring of probably 10 subunits is part of the complex rotary element. This Debaryomyces hansenii (strain ATCC 36239 / CBS 767 / BCRC 21394 / JCM 1990 / NBRC 0083 / IGC 2968) (Yeast) protein is ATP synthase subunit 9, mitochondrial (ATP9).